Here is a 117-residue protein sequence, read N- to C-terminus: Putative membrane protein insertion efficiency factor (117 aa).

Belongs to the UPF0161 family.

It is found in the cell inner membrane. Functionally, could be involved in insertion of integral membrane proteins into the membrane. The sequence is that of Putative membrane protein insertion efficiency factor from Helicobacter pylori (strain ATCC 700392 / 26695) (Campylobacter pylori).